The following is a 437-amino-acid chain: Glutamate-1-semialdehyde 2,1-aminomutase (437 aa).

Lysine 273 is subject to N6-(pyridoxal phosphate)lysine.

This sequence belongs to the class-III pyridoxal-phosphate-dependent aminotransferase family. HemL subfamily. In terms of assembly, homodimer. Pyridoxal 5'-phosphate serves as cofactor.

Its subcellular location is the cytoplasm. The catalysed reaction is (S)-4-amino-5-oxopentanoate = 5-aminolevulinate. Its pathway is porphyrin-containing compound metabolism; protoporphyrin-IX biosynthesis; 5-aminolevulinate from L-glutamyl-tRNA(Glu): step 2/2. The chain is Glutamate-1-semialdehyde 2,1-aminomutase from Chlamydia abortus (strain DSM 27085 / S26/3) (Chlamydophila abortus).